Consider the following 231-residue polypeptide: 7-cyano-7-deazaguanine synthase (231 aa).

8–18 (FSGGQDSTTCL) is a binding site for ATP. Zn(2+) is bound by residues cysteine 188, cysteine 197, cysteine 200, and cysteine 203.

This sequence belongs to the QueC family. The cofactor is Zn(2+).

The enzyme catalyses 7-carboxy-7-deazaguanine + NH4(+) + ATP = 7-cyano-7-deazaguanine + ADP + phosphate + H2O + H(+). The protein operates within purine metabolism; 7-cyano-7-deazaguanine biosynthesis. In terms of biological role, catalyzes the ATP-dependent conversion of 7-carboxy-7-deazaguanine (CDG) to 7-cyano-7-deazaguanine (preQ(0)). The polypeptide is 7-cyano-7-deazaguanine synthase (Citrobacter koseri (strain ATCC BAA-895 / CDC 4225-83 / SGSC4696)).